The following is a 467-amino-acid chain: ATP-dependent protease ATPase subunit HslU (467 aa).

ATP is bound by residues Ile20, 62-67, Asp280, Glu345, and Arg417; that span reads GVGKTE.

Belongs to the ClpX chaperone family. HslU subfamily. A double ring-shaped homohexamer of HslV is capped on each side by a ring-shaped HslU homohexamer. The assembly of the HslU/HslV complex is dependent on binding of ATP.

Its subcellular location is the cytoplasm. Its function is as follows. ATPase subunit of a proteasome-like degradation complex; this subunit has chaperone activity. The binding of ATP and its subsequent hydrolysis by HslU are essential for unfolding of protein substrates subsequently hydrolyzed by HslV. HslU recognizes the N-terminal part of its protein substrates and unfolds these before they are guided to HslV for hydrolysis. In Ligilactobacillus salivarius (strain UCC118) (Lactobacillus salivarius), this protein is ATP-dependent protease ATPase subunit HslU.